A 120-amino-acid chain; its full sequence is NAD(P)H-quinone oxidoreductase subunit 3 (120 aa).

A run of 3 helical transmembrane segments spans residues 6-26 (GYDA…LALI), 64-84 (MFAL…PWAV), and 89-109 (LGVL…VALA).

This sequence belongs to the complex I subunit 3 family. In terms of assembly, NDH-1 can be composed of about 15 different subunits; different subcomplexes with different compositions have been identified which probably have different functions.

It localises to the cellular thylakoid membrane. The catalysed reaction is a plastoquinone + NADH + (n+1) H(+)(in) = a plastoquinol + NAD(+) + n H(+)(out). It carries out the reaction a plastoquinone + NADPH + (n+1) H(+)(in) = a plastoquinol + NADP(+) + n H(+)(out). Functionally, NDH-1 shuttles electrons from an unknown electron donor, via FMN and iron-sulfur (Fe-S) centers, to quinones in the respiratory and/or the photosynthetic chain. The immediate electron acceptor for the enzyme in this species is believed to be plastoquinone. Couples the redox reaction to proton translocation, and thus conserves the redox energy in a proton gradient. Cyanobacterial NDH-1 also plays a role in inorganic carbon-concentration. The sequence is that of NAD(P)H-quinone oxidoreductase subunit 3 from Parasynechococcus marenigrum (strain WH8102).